We begin with the raw amino-acid sequence, 132 residues long: Peptide methionine sulfoxide reductase MsrB (132 aa).

The 123-residue stretch at 9–131 (DAQWRAELSP…NSASLSFHPK (123 aa)) folds into the MsrB domain. The Zn(2+) site is built by Cys48, Cys51, Cys97, and Cys100. Cys120 functions as the Nucleophile in the catalytic mechanism.

The protein belongs to the MsrB Met sulfoxide reductase family. Zn(2+) is required as a cofactor.

It catalyses the reaction L-methionyl-[protein] + [thioredoxin]-disulfide + H2O = L-methionyl-(R)-S-oxide-[protein] + [thioredoxin]-dithiol. The sequence is that of Peptide methionine sulfoxide reductase MsrB from Thiobacillus denitrificans (strain ATCC 25259 / T1).